Here is a 395-residue protein sequence, read N- to C-terminus: S-adenosylmethionine synthase (395 aa).

Residue His-15 participates in ATP binding. Asp-17 is a binding site for Mg(2+). Glu-43 contacts K(+). Position 99 (Gln-99) interacts with L-methionine. Residues 99 to 109 (QSPDIAMGVNE) form a flexible loop region. Residues 174–176 (DGK), 240–241 (RF), Asp-249, 255–256 (RK), Ala-272, and Lys-276 contribute to the ATP site. Asp-249 contributes to the L-methionine binding site. Lys-280 contacts L-methionine.

The protein belongs to the AdoMet synthase family. Homotetramer; dimer of dimers. Mg(2+) is required as a cofactor. Requires K(+) as cofactor.

Its subcellular location is the cytoplasm. The enzyme catalyses L-methionine + ATP + H2O = S-adenosyl-L-methionine + phosphate + diphosphate. It functions in the pathway amino-acid biosynthesis; S-adenosyl-L-methionine biosynthesis; S-adenosyl-L-methionine from L-methionine: step 1/1. Catalyzes the formation of S-adenosylmethionine (AdoMet) from methionine and ATP. The overall synthetic reaction is composed of two sequential steps, AdoMet formation and the subsequent tripolyphosphate hydrolysis which occurs prior to release of AdoMet from the enzyme. The chain is S-adenosylmethionine synthase from Moorella thermoacetica (strain ATCC 39073 / JCM 9320).